We begin with the raw amino-acid sequence, 599 residues long: Aspartate--tRNA(Asp/Asn) ligase (599 aa).

Glutamate 183 contributes to the L-aspartate binding site. The tract at residues 207-210 is aspartate; that stretch reads QIFK. Arginine 229 lines the L-aspartate pocket. ATP contacts are provided by residues 229 to 231 and glutamine 238; that span reads RDE. Histidine 456 provides a ligand contact to L-aspartate. Glutamate 490 lines the ATP pocket. L-aspartate is bound at residue arginine 497. 542 to 545 is an ATP binding site; the sequence is GLDR.

This sequence belongs to the class-II aminoacyl-tRNA synthetase family. Type 1 subfamily. As to quaternary structure, homodimer.

It is found in the cytoplasm. It catalyses the reaction tRNA(Asx) + L-aspartate + ATP = L-aspartyl-tRNA(Asx) + AMP + diphosphate. Its function is as follows. Aspartyl-tRNA synthetase with relaxed tRNA specificity since it is able to aspartylate not only its cognate tRNA(Asp) but also tRNA(Asn). Reaction proceeds in two steps: L-aspartate is first activated by ATP to form Asp-AMP and then transferred to the acceptor end of tRNA(Asp/Asn). In Protochlamydia amoebophila (strain UWE25), this protein is Aspartate--tRNA(Asp/Asn) ligase.